The primary structure comprises 139 residues: MEDLLTNPLIIAAIIGIISAIFGKKSKEEKQNSQKRKKPQHVQSASPQKKQSKEDAPAPIPNRMEQARREAEERRRETARNLKGLERDLAAAKQKTVYTKQKMLQVNKDTVVQGIVLGEVFGPPRAKKPHRTMRPARKN.

The chain crosses the membrane as a helical span at residues D3 to G23. The disordered stretch occupies residues K25 to R87. Positions N62–V97 form a coiled coil. The segment covering E65–R87 has biased composition (basic and acidic residues).

Its subcellular location is the cell membrane. The sequence is that of Membrane protein YqfB (yqfB) from Bacillus subtilis (strain 168).